We begin with the raw amino-acid sequence, 1847 residues long: MLIQKNQCHITRTRENCDCTMNTVNEDLCLSASTLGSSSVTTQLVDPLDRKICLIRRQNDVKKRVIWGIEVAEKLHWKGWELGKETTRTLVLKNLSLKTQKMKYRPPKTKFFFTIIPQPIFLSPGITLTLPIVFRPLEAKEYTDQLWFEKEEGVFCVTLKATLPCYKLDCPSSLQLPMCALGDTVETWFCLNNVGDLPTFFTWEVPAPFQILPTTGLLEPGLGCKIKVTFEPLIAVIHEVEALCWYGKGNKQKNSINIQAAAKCAQLLVSIKHKGLEDQDQEGFQKVVHFGYVSVGSVAERQIRLYNPSAVNAPFKIEMAEHVLTKDPSFSCSTSQGIVPPGEKKCLSLFFHPKTLDSRAIDYFSIIPSGCATKTLLQVVGFCRGPDAVLQHSCVNFHWVKLGERREQTLWIENQSDCQAHFQFDIDCQESVFSIRPAFGTLAGKTRMTLHCAYQPTHPIISFRRVACLIHHQDPLFLDLIGTCHSDSIKPAILTPQHLTWYRTHLARGLTLYPPDILAAMLKEKKLERDEDGALILPIESLPMQELEDLPDQKYPNIPPMTEYFFDGTRDLAIFPPAVCLEPIDVDFGACPGPEAPNPVPLCLRNYTKGKITVVWTGRSDCPFWVTPVTSDVPPLKSIALRLYFQPSSPNCLYAVELEAFAVYKVLQCYSNIEEDCTVVPSWCLKVRARGHSYSPALEHHIPHYSLDSPQTFPAVSPGKPSYRSLFLVNKGSMLMTFSLAPNSSSDITLRPSSGLIGPGAHQVFLISTYPKGTSWRQHIFYLNFNFYPQYLKEVSMQSREEPLDLKLDTHKSIYFKPTWVGCSSTSNFTFHNPSRLPLQFEWRVSQEHQKVLAVQPSKGTIHPNENLTLTWIFSPLEEIKYLFRVGIWVWEARQSQKTKPQATVHYRIRLVGMGVTGCLSAKPVELDFGNVLVNSQEVKPLVLLNDGNCTLYYRLVLEQHRPKGLHSDPCALEFDHSEGTMPPHSQDTIYLTARPKVRSQYSWTISYCLLSQRAPPTNSMDGKKKALCHVSLAAAYPLLSVLDICSMGSTEGITRKHLWHLFSLDTLNSYLARDPTAKELTYKVPTRHSMSRTPPIFTPLKLDFNFGAAPHNALPSVVLLVLKNCGLVPLDWAFLFPSDQQLDLDLWVEQEDLNSNELHQMRAEDNSLFSINPKTGSLNPGQEQMVEFTYRHLFVGTDRLSVLFKVSHGREILLQFIGVTVKLEQKYVHFTSTIHQFIPVPIGDTLPPRQIYELYNGGSVPVTYEVQVSVLSKVQEKNFDHPIFCCLNPKGDIQPGTTARILWIFSPIEAKTYTVEVPIHIIGWNSAVVCFQGVGYDPCVMGDTAPFHSISSWDSSSISSRLMVPGQNVFLSQSHISLGNIPVQSKCSRLFFLNNISKNETIVFTWKPRSLDFGEVTVSPMEGEVGPEEGAPILVTLKASVHASFYSIDLICKVYQRELMRQYHKELQEWNEEKARQEVEFTITDRKVKRRAYCAAHEPPKKYKTLPPITNQPPLNRPATWNLKLAKKETSWPCPQPPVPGLLCLGLTARAHATDYYLANFFSEFPCHFLYRELPKKKSSKEESKSSEELPDKKGPVSRQKQQLLVDCLTSIIRGLLEDKNFHNAVDQNLVEQVPYFCQFWNEQSARFLAQKSSLYLVPILSLPPSYEGRKSKEQEEDLFGKMPGGQEDDEEEEEDEEEAEEEEEEIEEEMSKDEEDIDKDAKMTWSGIKVTETSQHSLQWQWQQDLKTIIKEETESDEKEAIGRLPAFANLQEAILENMIQNILVEASRGEVVLTSRPRIIALPPVSMHRTDNLLQMSQGDVLCSGMQHPDCLLVSASSPSNMTT.

The chain crosses the membrane as a helical span at residues 112–132 (FFTIIPQPIFLSPGITLTLPI). An MSP domain is found at 805–914 (DLKLDTHKSI…VHYRIRLVGM (110 aa)). Residues 1457–1483 (QRELMRQYHKELQEWNEEKARQEVEFT) are a coiled coil. The disordered stretch occupies residues 1668 to 1721 (YEGRKSKEQEEDLFGKMPGGQEDDEEEEEDEEEAEEEEEEIEEEMSKDEEDIDK). The span at 1688–1720 (QEDDEEEEEDEEEAEEEEEEIEEEMSKDEEDID) shows a compositional bias: acidic residues.

This sequence belongs to the CFAP65 family. As to quaternary structure, interacts with CFAP47. As to expression, predominantly expressed in testis. Highly expressed in round and elongating spermatids. Expressed also in certain ciliated organs, such as the brain, lung and kidney.

It is found in the cell projection. The protein resides in the cilium. Its subcellular location is the flagellum membrane. The protein localises to the cytoplasmic vesicle. It localises to the secretory vesicle. It is found in the acrosome membrane. The protein resides in the cytoplasm. In terms of biological role, plays a role in flagellar formation and sperm motility. In Mus musculus (Mouse), this protein is Cilia- and flagella-associated protein 65.